A 256-amino-acid chain; its full sequence is Trypsin, alkaline B (256 aa).

The N-terminal stretch at 1–17 (MRLFLALLALGFAAVAA) is a signal peptide. Residues 18 to 24 (VPANPQR) constitute a propeptide, activation peptide. One can recognise a Peptidase S1 domain in the interval 25 to 256 (IVGGSTTTIQ…RFANWIRNNS (232 aa)). The cysteines at positions 55 and 71 are disulfide-linked. Active-site charge relay system residues include His70 and Asp115. Cystine bridges form between Cys180/Cys197 and Cys209/Cys233. Ser213 acts as the Charge relay system in catalysis.

This sequence belongs to the peptidase S1 family. As to expression, midgut.

Its subcellular location is the secreted. It is found in the extracellular space. It catalyses the reaction Preferential cleavage: Arg-|-Xaa, Lys-|-Xaa.. In Manduca sexta (Tobacco hawkmoth), this protein is Trypsin, alkaline B.